The chain runs to 151 residues: MVVNKQGSVKSIKRKARKSKKVVSGRAKEFTYKGYSLEDLQKMSMEELIKILPARARRTLLREPNYEQKKLMEKLESDEEDVKTHVRDVIILPNYVGKIVEVYNGNSYFKFEIKPEMIGHYLGEFVMTRKEVKHSGPGVGATRSSKFMPLK.

Belongs to the universal ribosomal protein uS19 family.

Its function is as follows. Protein S19 forms a complex with S13 that binds strongly to the 16S ribosomal RNA. The protein is Small ribosomal subunit protein uS19 (rps19) of Thermoplasma acidophilum (strain ATCC 25905 / DSM 1728 / JCM 9062 / NBRC 15155 / AMRC-C165).